The following is a 177-amino-acid chain: ATP synthase subunit delta (177 aa).

The protein belongs to the ATPase delta chain family. As to quaternary structure, F-type ATPases have 2 components, F(1) - the catalytic core - and F(0) - the membrane proton channel. F(1) has five subunits: alpha(3), beta(3), gamma(1), delta(1), epsilon(1). F(0) has three main subunits: a(1), b(2) and c(10-14). The alpha and beta chains form an alternating ring which encloses part of the gamma chain. F(1) is attached to F(0) by a central stalk formed by the gamma and epsilon chains, while a peripheral stalk is formed by the delta and b chains.

The protein localises to the cell membrane. Functionally, f(1)F(0) ATP synthase produces ATP from ADP in the presence of a proton or sodium gradient. F-type ATPases consist of two structural domains, F(1) containing the extramembraneous catalytic core and F(0) containing the membrane proton channel, linked together by a central stalk and a peripheral stalk. During catalysis, ATP synthesis in the catalytic domain of F(1) is coupled via a rotary mechanism of the central stalk subunits to proton translocation. This protein is part of the stalk that links CF(0) to CF(1). It either transmits conformational changes from CF(0) to CF(1) or is implicated in proton conduction. This Exiguobacterium sp. (strain ATCC BAA-1283 / AT1b) protein is ATP synthase subunit delta.